We begin with the raw amino-acid sequence, 483 residues long: Glycogen synthase (483 aa).

K15 lines the ADP-alpha-D-glucose pocket.

The protein belongs to the glycosyltransferase 1 family. Bacterial/plant glycogen synthase subfamily.

It catalyses the reaction [(1-&gt;4)-alpha-D-glucosyl](n) + ADP-alpha-D-glucose = [(1-&gt;4)-alpha-D-glucosyl](n+1) + ADP + H(+). Its pathway is glycan biosynthesis; glycogen biosynthesis. In terms of biological role, synthesizes alpha-1,4-glucan chains using ADP-glucose. In Desulfatibacillum aliphaticivorans, this protein is Glycogen synthase.